The chain runs to 429 residues: Adenylosuccinate synthetase (429 aa).

GTP contacts are provided by residues Gly12–Lys18 and Gly40–Thr42. Asp13 serves as the catalytic Proton acceptor. The Mg(2+) site is built by Asp13 and Gly40. IMP contacts are provided by residues Asp13–Lys16, Asn38–His41, Thr129, Arg143, Gln224, Thr239, and Arg303. Residue His41 is the Proton donor of the active site. Position 299–305 (Val299–Arg305) interacts with substrate. Residues Arg305, Lys331 to Asp333, and Gly413 to Gly415 each bind GTP.

Belongs to the adenylosuccinate synthetase family. In terms of assembly, homodimer. Requires Mg(2+) as cofactor.

The protein resides in the cytoplasm. It carries out the reaction IMP + L-aspartate + GTP = N(6)-(1,2-dicarboxyethyl)-AMP + GDP + phosphate + 2 H(+). It functions in the pathway purine metabolism; AMP biosynthesis via de novo pathway; AMP from IMP: step 1/2. Its function is as follows. Plays an important role in the de novo pathway of purine nucleotide biosynthesis. Catalyzes the first committed step in the biosynthesis of AMP from IMP. In Rhodococcus jostii (strain RHA1), this protein is Adenylosuccinate synthetase.